A 65-amino-acid chain; its full sequence is Large ribosomal subunit protein uL29 (65 aa).

This sequence belongs to the universal ribosomal protein uL29 family.

This chain is Large ribosomal subunit protein uL29, found in Lactobacillus delbrueckii subsp. bulgaricus (strain ATCC 11842 / DSM 20081 / BCRC 10696 / JCM 1002 / NBRC 13953 / NCIMB 11778 / NCTC 12712 / WDCM 00102 / Lb 14).